The chain runs to 796 residues: Polyribonucleotide nucleotidyltransferase (796 aa).

Mg(2+) is bound by residues aspartate 490 and aspartate 496. One can recognise a KH domain in the interval 557–616 (PRIESIFINKDKIRNVIGSGGKNIRDICEKTGAKIEIIQDGTVMIYAVNNEAVEYAKSMI). Positions 626-693 (GKVFEGTVVE…DREHIQLSMR (68 aa)) constitute an S1 motif domain. 3 stretches are compositionally biased toward low complexity: residues 717–728 (DDSCGSTGGSSF), 747–759 (GGSSRSSRRNSNG), and 769–784 (SSNGFGNNNRSFSNSR). The interval 717–796 (DDSCGSTGGS…HDVPRKPRFF (80 aa)) is disordered. The segment covering 785-796 (NGHDVPRKPRFF) has biased composition (basic and acidic residues).

This sequence belongs to the polyribonucleotide nucleotidyltransferase family. Mg(2+) serves as cofactor.

It is found in the cytoplasm. It catalyses the reaction RNA(n+1) + phosphate = RNA(n) + a ribonucleoside 5'-diphosphate. In terms of biological role, involved in mRNA degradation. Catalyzes the phosphorolysis of single-stranded polyribonucleotides processively in the 3'- to 5'-direction. This Ehrlichia chaffeensis (strain ATCC CRL-10679 / Arkansas) protein is Polyribonucleotide nucleotidyltransferase.